Consider the following 1037-residue polypeptide: Outer dynein arm-docking complex subunit 2 (1037 aa).

2 stretches are compositionally biased toward basic and acidic residues: residues 316–334 and 376–391; these read EEQQ…EDGH and SSIK…KLEK. Disordered stretches follow at residues 316 to 353 and 376 to 439; these read EEQQ…FGKS and SSIK…ANAD. ARM repeat units lie at residues 477–516, 518–557, 528–570, 615–654, 656–695, 739–778, 821–860, 864–903, 905–944, and 946–985; these read ETCQ…EISH, PQIR…NVAK, GGLP…QHGG, HSNK…ECAS, ENYR…QCAE, KENV…ECCQ, PESM…PCIE, DAGE…NIAK, QENL…RCCM, and GRNR…QLSE. The residue at position 545 (Lys-545) is an N6-methyllysine.

In terms of assembly, component of the outer dynein arm-docking complex along with ODAD1, ODAD3, and ODAD4. Interacts with CFAP61. As to expression, highly expressed in testis. In males, also detected at lower levels in lung, brain, liver and muscle. In females, detected in ovary.

The protein localises to the cytoplasm. The protein resides in the cytoskeleton. Its subcellular location is the cilium axoneme. It localises to the cilium basal body. Its function is as follows. Component of the outer dynein arm-docking complex (ODA-DC) that mediates outer dynein arms (ODA) binding onto the doublet microtubule. Involved in mediating assembly of both ODAs and their axonemal docking complex onto ciliary microtubules. The polypeptide is Outer dynein arm-docking complex subunit 2 (Mus musculus (Mouse)).